Reading from the N-terminus, the 130-residue chain is Small ribosomal subunit protein uS8 (130 aa).

It belongs to the universal ribosomal protein uS8 family. In terms of assembly, part of the 30S ribosomal subunit. Contacts proteins S5 and S12.

In terms of biological role, one of the primary rRNA binding proteins, it binds directly to 16S rRNA central domain where it helps coordinate assembly of the platform of the 30S subunit. The chain is Small ribosomal subunit protein uS8 from Shewanella denitrificans (strain OS217 / ATCC BAA-1090 / DSM 15013).